The sequence spans 206 residues: Large ribosomal subunit protein uL4 (206 aa).

The interval 63 to 85 (MYKQKGTGSARHGSARAPQFRGG) is disordered.

Belongs to the universal ribosomal protein uL4 family. As to quaternary structure, part of the 50S ribosomal subunit.

Its function is as follows. One of the primary rRNA binding proteins, this protein initially binds near the 5'-end of the 23S rRNA. It is important during the early stages of 50S assembly. It makes multiple contacts with different domains of the 23S rRNA in the assembled 50S subunit and ribosome. In terms of biological role, forms part of the polypeptide exit tunnel. The sequence is that of Large ribosomal subunit protein uL4 from Beijerinckia indica subsp. indica (strain ATCC 9039 / DSM 1715 / NCIMB 8712).